Consider the following 448-residue polypeptide: Trigger factor (448 aa).

Positions 172–257 (GDRVTVDFVG…MKKIEWPHLP (86 aa)) constitute a PPIase FKBP-type domain.

This sequence belongs to the FKBP-type PPIase family. Tig subfamily.

Its subcellular location is the cytoplasm. It catalyses the reaction [protein]-peptidylproline (omega=180) = [protein]-peptidylproline (omega=0). Involved in protein export. Acts as a chaperone by maintaining the newly synthesized protein in an open conformation. Functions as a peptidyl-prolyl cis-trans isomerase. This chain is Trigger factor, found in Burkholderia cenocepacia (strain ATCC BAA-245 / DSM 16553 / LMG 16656 / NCTC 13227 / J2315 / CF5610) (Burkholderia cepacia (strain J2315)).